The primary structure comprises 125 residues: Small ribosomal subunit protein uS12c (125 aa).

Belongs to the universal ribosomal protein uS12 family. In terms of assembly, part of the 30S ribosomal subunit.

It localises to the plastid. Its subcellular location is the chloroplast. Its function is as follows. With S4 and S5 plays an important role in translational accuracy. Located at the interface of the 30S and 50S subunits. The chain is Small ribosomal subunit protein uS12c (rps12) from Nephroselmis olivacea (Green alga).